The following is a 310-amino-acid chain: RNA exonuclease 4 (310 aa).

Over residues 1–11 the composition is skewed to polar residues; the sequence is MDVNNLSSNWK. The tract at residues 1–107 is disordered; that stretch reads MDVNNLSSNW…SKPTKVNEGR (107 aa). Basic and acidic residues-rich tracts occupy residues 44–53 and 61–70; these read QKIETIERKK and MSEGQEHGGD. Over residues 83 to 93 the composition is skewed to polar residues; that stretch reads HKSSTATISEQ. Basic and acidic residues predominate over residues 94-105; sequence SRTESKPTKVNE. Residues 115–277 enclose the Exonuclease domain; the sequence is KYVAMDCEMV…YRRDKEAFER (163 aa). Positions 287–310 are disordered; it reads VVVDKKENGEDQKKKKKKKKPRKR. Over residues 288–299 the composition is skewed to basic and acidic residues; sequence VVDKKENGEDQK. A compositionally biased stretch (basic residues) spans 300–310; the sequence is KKKKKKKPRKR.

It belongs to the REXO4 family.

It is found in the nucleus. Functionally, exoribonuclease involved in ribosome biosynthesis. Involved in the processing of ITS1, the internal transcribed spacer localized between the 18S and 5.8S rRNAs. The polypeptide is RNA exonuclease 4 (rex4) (Aspergillus fumigatus (strain ATCC MYA-4609 / CBS 101355 / FGSC A1100 / Af293) (Neosartorya fumigata)).